The sequence spans 289 residues: 33 kDa chaperonin (289 aa).

2 cysteine pairs are disulfide-bonded: Cys-230–Cys-232 and Cys-263–Cys-266.

The protein belongs to the HSP33 family. In terms of processing, under oxidizing conditions two disulfide bonds are formed involving the reactive cysteines. Under reducing conditions zinc is bound to the reactive cysteines and the protein is inactive.

It is found in the cytoplasm. In terms of biological role, redox regulated molecular chaperone. Protects both thermally unfolding and oxidatively damaged proteins from irreversible aggregation. Plays an important role in the bacterial defense system toward oxidative stress. This chain is 33 kDa chaperonin, found in Shigella flexneri serotype 5b (strain 8401).